We begin with the raw amino-acid sequence, 241 residues long: MSMLFYTLITALLIGVQAEPYTDSNLPEGDSVPEAHWTKLQHSLDTALRRARSAPAAPIAARVTGQTRNITVDPRLFKKRKLRSPRVLFSTQPPPTSSDTLDLDFQAHGTISFNRTHRSKRSSTHPVFQMGEFSVCDSVSVWVGDKTTATDIKGNEVTVLGEVNINNSVFKQYFFETKCRARNPVESGCRGIDSKHWNSYCTTTHTFVKALTTDDRQAAWRFIRIDTACVCVLTRKAPRRG.

Positions 1 to 18 (MSMLFYTLITALLIGVQA) are cleaved as a signal peptide. The propeptide occupies 19-121 (EPYTDSNLPE…SFNRTHRSKR (103 aa)). N-linked (GlcNAc...) asparagine glycosylation is found at N69, N114, and N166. 3 disulfides stabilise this stretch: C136-C201, C179-C229, and C189-C231.

It belongs to the NGF-beta family. In terms of assembly, homodimer. The homodimer interacts with a single NTRK1 chain. The homodimer interacts with a single NGFR chain. The NGF dimer interacts with a single SORCS2 chain (via extracellular domain). The NGF precursor (proNGF) binds to a receptor complex formed by SORT1 and NGFR, which leads to NGF endocytosis. Both mature NGF and the immature NGF precursor (proNGF) interact with SORCS2 and with the heterodimer formed by SORCS2 and NGFR (via extracellular domains). The NGF precursor (proNGF) has much higher affinity for SORCS2 than mature NGF. The NGF precursor (proNGF) has much higher affinity for SORT1 than mature NGF. Interacts with ADAM10 in a divalent cation-dependent manner. Interacts with SORCS3.

Its subcellular location is the secreted. It is found in the endosome lumen. In terms of biological role, nerve growth factor is important for the development and maintenance of the sympathetic and sensory nervous systems. Extracellular ligand for the NTRK1 and NGFR receptors, activates cellular signaling cascades through those receptor tyrosine kinase to regulate neuronal proliferation, differentiation and survival. Inhibits metalloproteinase dependent proteolysis of platelet glycoprotein VI. This is Beta-nerve growth factor (NGF) from Mastomys natalensis (African soft-furred rat).